Consider the following 1288-residue polypeptide: Contactin-associated protein-like 3B (1288 aa).

The N-terminal stretch at 1-25 (MASVAWAVLKVLLLLPTQTWSPVGA) is a signal peptide. The disordered stretch occupies residues 23–61 (VGAGNPPDCDSPLASALPRSSFSSSSELSSSHGPGFSRL). Residues 26–1245 (GNPPDCDSPL…LVNADRRDSA (1220 aa)) lie on the Extracellular side of the membrane. The F5/8 type C domain maps to 31–177 (CDSPLASALP…IGMRIEVYGC (147 aa)). 6 disulfide bridges follow: cysteine 31–cysteine 177, cysteine 332–cysteine 364, cysteine 513–cysteine 545, cysteine 551–cysteine 562, cysteine 556–cysteine 571, and cysteine 573–cysteine 583. Positions 33–59 (SPLASALPRSSFSSSSELSSSHGPGFS) are enriched in low complexity. 2 Laminin G-like domains span residues 183 to 364 (VVYF…SFSC) and 370 to 545 (VPVT…IDSC). Residue asparagine 359 is glycosylated (N-linked (GlcNAc...) asparagine). The EGF-like 1 domain occupies 547–584 (ITDRCLPSYCEHGGECSQSWDTFSCDCLGTGYTGETCH). The region spanning 585–792 (SSLYEQSCEA…LLCRGDKSFW (208 aa)) is the Fibrinogen C-terminal domain. Asparagine 706 carries an N-linked (GlcNAc...) asparagine glycan. A Laminin G-like 3 domain is found at 793-958 (NSASFNTETS…TVTPGVEPGC (166 aa)). 5 cysteine pairs are disulfide-bonded: cysteine 931–cysteine 958, cysteine 962–cysteine 975, cysteine 969–cysteine 984, cysteine 986–cysteine 996, and cysteine 1167–cysteine 1203. In terms of domain architecture, EGF-like 2 spans 959-997 (AGHCSTYGHLCRNGGRCREKRRGVTCDCAFSAYDGPFCS). One can recognise a Laminin G-like 4 domain in the interval 1016 to 1203 (EHYTLSENSS…RGHVAPMARC (188 aa)). The tract at residues 1215 to 1236 (ELAPRLAGGAGRSGPVDEGEPL) is disordered. The helical transmembrane segment at 1246 to 1266 (VIGGVIAVEIFILLCITAIAI) threads the bilayer. The Cytoplasmic segment spans residues 1267–1288 (RIYQQRKLRKENESKVSKKEEC).

This sequence belongs to the neurexin family.

The protein localises to the membrane. The chain is Contactin-associated protein-like 3B (CNTNAP3B) from Homo sapiens (Human).